The primary structure comprises 290 residues: 33 kDa chaperonin (290 aa).

Disulfide bonds link cysteine 235–cysteine 237 and cysteine 268–cysteine 271.

This sequence belongs to the HSP33 family. Under oxidizing conditions two disulfide bonds are formed involving the reactive cysteines. Under reducing conditions zinc is bound to the reactive cysteines and the protein is inactive.

It localises to the cytoplasm. Functionally, redox regulated molecular chaperone. Protects both thermally unfolding and oxidatively damaged proteins from irreversible aggregation. Plays an important role in the bacterial defense system toward oxidative stress. In Streptococcus pyogenes serotype M5 (strain Manfredo), this protein is 33 kDa chaperonin.